A 950-amino-acid chain; its full sequence is 2-oxoglutarate dehydrogenase E1 component (950 aa).

It belongs to the alpha-ketoglutarate dehydrogenase family. In terms of assembly, homodimer. Part of the 2-oxoglutarate dehydrogenase (OGDH) complex composed of E1 (2-oxoglutarate dehydrogenase), E2 (dihydrolipoamide succinyltransferase) and E3 (dihydrolipoamide dehydrogenase); the complex contains multiple copies of the three enzymatic components (E1, E2 and E3). Thiamine diphosphate is required as a cofactor.

It catalyses the reaction N(6)-[(R)-lipoyl]-L-lysyl-[protein] + 2-oxoglutarate + H(+) = N(6)-[(R)-S(8)-succinyldihydrolipoyl]-L-lysyl-[protein] + CO2. In terms of biological role, E1 component of the 2-oxoglutarate dehydrogenase (OGDH) complex which catalyzes the decarboxylation of 2-oxoglutarate, the first step in the conversion of 2-oxoglutarate to succinyl-CoA and CO(2). The chain is 2-oxoglutarate dehydrogenase E1 component (odhA) from Cupriavidus necator (strain ATCC 17699 / DSM 428 / KCTC 22496 / NCIMB 10442 / H16 / Stanier 337) (Ralstonia eutropha).